A 546-amino-acid chain; its full sequence is Sulfite oxidase, mitochondrial (546 aa).

The transit peptide at 1-80 (MLPRLYRSVA…YHDHRCRASQ (80 aa)) directs the protein to the mitochondrion. Positions 83 to 162 (PRIYSKEDVR…LAEYKIGELN (80 aa)) constitute a Cytochrome b5 heme-binding domain. Histidine 119 serves as a coordination point for heme b. Serine 124 is modified (phosphoserine). Heme b is bound by residues histidine 144, glutamine 146, and histidine 148. The tract at residues 166–175 (RMSPPLEASD) is hinge. A moco domain region spans residues 176–402 (PYSNDPMRHP…YSHWQRRDYK (227 aa)). Mo-molybdopterin contacts are provided by residues 216 to 220 (FTRNH), cysteine 265, aspartate 323, histidine 362, arginine 367, and 378 to 380 (HVK). The segment at 403 to 539 (GFSPSVDWDT…RGVLSNAWHR (137 aa)) is homodimerization.

As to quaternary structure, homodimer. The cofactor is heme b. It depends on Mo-molybdopterin as a cofactor.

The protein resides in the mitochondrion intermembrane space. The catalysed reaction is sulfite + O2 + H2O = sulfate + H2O2. It participates in energy metabolism; sulfur metabolism. Its function is as follows. Catalyzes the oxidation of sulfite to sulfate, the terminal reaction in the oxidative degradation of sulfur-containing amino acids. This Rattus norvegicus (Rat) protein is Sulfite oxidase, mitochondrial.